The sequence spans 487 residues: Cysteine--tRNA ligase (487 aa).

C29 is a binding site for Zn(2+). Positions 31 to 41 (VTVYDFCHIGH) match the 'HIGH' region motif. Residues C209, H234, and E238 each contribute to the Zn(2+) site. Positions 266-270 (KMSKS) match the 'KMSKS' region motif. K269 serves as a coordination point for ATP.

This sequence belongs to the class-I aminoacyl-tRNA synthetase family. As to quaternary structure, monomer. Zn(2+) is required as a cofactor.

Its subcellular location is the cytoplasm. It catalyses the reaction tRNA(Cys) + L-cysteine + ATP = L-cysteinyl-tRNA(Cys) + AMP + diphosphate. The chain is Cysteine--tRNA ligase from Trichlorobacter lovleyi (strain ATCC BAA-1151 / DSM 17278 / SZ) (Geobacter lovleyi).